We begin with the raw amino-acid sequence, 340 residues long: Armadillo repeat-containing protein 12 (340 aa).

An interaction with TBC1D15 region spans residues 1–101 (MGKSIPQYLG…SITRCVYLLE (101 aa)). ARM repeat units lie at residues 100–139 (LEAE…AFSG), 179–218 (LPDY…YLAQ), and 278–318 (SLHE…SLQY).

In terms of assembly, interacts with TBC1D15, TBC1D21, GK2 and IMMT. Interacts with VDAC2 and VDAC3 in a TBC1D21-dependent manner. Interacts (via ARM domains) with RBBP4. As to expression, expressed in testis. Highly expressed in the mid-piece of the elongated and late spermatids. Expressed at higher levels in neuroblastoma tissues and cell lines, than those of normal dorsal ganglia (at protein level). Expressed in breast cancer, colon cancer, hepatocellular carcinoma, lung cancer, pancreas cancer, prostate cancer, renal cancer and gastric cancer, but not in their normal counterparts.

The protein localises to the nucleus. The protein resides in the mitochondrion outer membrane. Functionally, essential for male fertility and sperm mitochondrial sheath formation. Required for proper mitochondrial elongation and coiling along the flagellum during the formation of the mitochondrial sheath. Facilitates the growth and aggressiveness of neuroblastoma cells. Increases the EZH2 activity and H3K27me3 levels in a RBBP4-dependent manner, and facilitates the enrichment of polycomb repressive complex 2 and H3K27me3 on gene promoters, resulting in transcriptional repression of tumor suppressors affecting the proliferation, invasion, and metastasis of tumor cells. In Homo sapiens (Human), this protein is Armadillo repeat-containing protein 12 (ARMC12).